The following is a 336-amino-acid chain: Phospho-N-acetylmuramoyl-pentapeptide-transferase (336 aa).

10 helical membrane passes run Leu-3–Ile-23, Gly-53–Ile-73, Ser-78–Leu-98, Leu-118–Ile-138, Val-143–Val-163, Gly-174–Ala-194, Phe-200–Asn-220, Val-226–Ala-246, Trp-251–Val-271, and Ala-316–Phe-336.

It belongs to the glycosyltransferase 4 family. MraY subfamily. Requires Mg(2+) as cofactor.

The protein resides in the cell membrane. It carries out the reaction UDP-N-acetyl-alpha-D-muramoyl-L-alanyl-gamma-D-glutamyl-L-lysyl-D-alanyl-D-alanine + di-trans,octa-cis-undecaprenyl phosphate = Mur2Ac(oyl-L-Ala-gamma-D-Glu-L-Lys-D-Ala-D-Ala)-di-trans,octa-cis-undecaprenyl diphosphate + UMP. It functions in the pathway cell wall biogenesis; peptidoglycan biosynthesis. Catalyzes the initial step of the lipid cycle reactions in the biosynthesis of the cell wall peptidoglycan: transfers peptidoglycan precursor phospho-MurNAc-pentapeptide from UDP-MurNAc-pentapeptide onto the lipid carrier undecaprenyl phosphate, yielding undecaprenyl-pyrophosphoryl-MurNAc-pentapeptide, known as lipid I. The polypeptide is Phospho-N-acetylmuramoyl-pentapeptide-transferase (Streptococcus pyogenes serotype M49 (strain NZ131)).